We begin with the raw amino-acid sequence, 491 residues long: Delayed-rectifier potassium channel regulatory subunit KCNS3 (491 aa).

Topologically, residues 1–182 (MVFGEFFHRP…IRMENPAYCL (182 aa)) are cytoplasmic. A helical membrane pass occupies residues 183 to 204 (SAKLIAISSLSVVLASIVAMCV). Over 205–220 (HSMSEFQNEDGEVDDP) the chain is Extracellular. The helical transmembrane segment at 221-243 (VLEGVEIACIAWFTGELAVRLAA) threads the bilayer. The Cytoplasmic portion of the chain corresponds to 244 to 254 (APCQKKFWKNP). Residues 255–275 (LNIIDFVSIIPFYATLAVDTK) traverse the membrane as a helical segment. Over 276–285 (EEESEDIENM) the chain is Extracellular. The helical; Voltage-sensor transmembrane segment at 286–306 (GKVVQILRLMRIFRILKLARH) threads the bilayer. The Cytoplasmic segment spans residues 307–321 (SVGLRSLGATLRHSY). A helical membrane pass occupies residues 322-343 (HEVGLLLLFLSVGISIFSVLIY). Topologically, residues 344–357 (SVEKDDHTSSLTSI) are extracellular. An intramembrane region (helical) is located at residues 358–369 (PICWWWATISMT). The Selectivity filter signature appears at 370–375 (TVGYGD). An intramembrane segment occupies 370–377 (TVGYGDTH). At 378 to 384 (PVTLAGK) the chain is on the extracellular side. A helical membrane pass occupies residues 385–413 (LIASTCIICGILVVALPITIIFNKFSKYY). The Cytoplasmic portion of the chain corresponds to 414 to 491 (QKQKDIDVDQ…TTSLENCTAK (78 aa)).

This sequence belongs to the potassium channel family. S (TC 1.A.1.2) subfamily. Kv9.3/KCNS3 sub-subfamily. Heterotetramer with KCNB1. Does not form homomultimers. In terms of tissue distribution, detected in whole normal term placental and placental chorionic plate arteries and veins. Detected in syncytiotrophoblast and in blood vessel endothelium within intermediate villi and chorionic plate (at protein level). Detected in most tissues, but not in peripheral blood lymphocytes. The highest levels of expression are in lung.

It is found in the cell membrane. Potassium channel regulatory subunit that modulates the delayed rectifier potassium channel activity of KCNB1 by namely slowing down the deactivation and inactivation time constants. While it does not form functional channel on its own, it can form functional heterotetrameric channels with KCNB1. The chain is Delayed-rectifier potassium channel regulatory subunit KCNS3 from Homo sapiens (Human).